Reading from the N-terminus, the 301-residue chain is Probable aspartoacylase (301 aa).

The Zn(2+) site is built by H13 and E16. Residues R54 and 61-62 contribute to the substrate site; that span reads NR. H105 is a binding site for Zn(2+). Substrate contacts are provided by E163 and Y273.

The protein belongs to the AspA/AstE family. Aspartoacylase subfamily. Requires Zn(2+) as cofactor.

It carries out the reaction an N-acyl-L-aspartate + H2O = a carboxylate + L-aspartate. This chain is Probable aspartoacylase, found in Prochlorococcus marinus (strain MIT 9215).